A 235-amino-acid chain; its full sequence is Large ribosomal subunit protein uL1 (235 aa).

It belongs to the universal ribosomal protein uL1 family. As to quaternary structure, part of the 50S ribosomal subunit.

Its function is as follows. Binds directly to 23S rRNA. The L1 stalk is quite mobile in the ribosome, and is involved in E site tRNA release. In terms of biological role, protein L1 is also a translational repressor protein, it controls the translation of the L11 operon by binding to its mRNA. This is Large ribosomal subunit protein uL1 from Prochlorococcus marinus subsp. pastoris (strain CCMP1986 / NIES-2087 / MED4).